The sequence spans 258 residues: Ubiquinone/menaquinone biosynthesis C-methyltransferase UbiE (258 aa).

S-adenosyl-L-methionine contacts are provided by residues Thr81, Asp102, and 130 to 131 (NA).

This sequence belongs to the class I-like SAM-binding methyltransferase superfamily. MenG/UbiE family.

The enzyme catalyses a 2-demethylmenaquinol + S-adenosyl-L-methionine = a menaquinol + S-adenosyl-L-homocysteine + H(+). It catalyses the reaction a 2-methoxy-6-(all-trans-polyprenyl)benzene-1,4-diol + S-adenosyl-L-methionine = a 5-methoxy-2-methyl-3-(all-trans-polyprenyl)benzene-1,4-diol + S-adenosyl-L-homocysteine + H(+). It functions in the pathway quinol/quinone metabolism; menaquinone biosynthesis; menaquinol from 1,4-dihydroxy-2-naphthoate: step 2/2. The protein operates within cofactor biosynthesis; ubiquinone biosynthesis. Functionally, methyltransferase required for the conversion of demethylmenaquinol (DMKH2) to menaquinol (MKH2) and the conversion of 2-polyprenyl-6-methoxy-1,4-benzoquinol (DDMQH2) to 2-polyprenyl-3-methyl-6-methoxy-1,4-benzoquinol (DMQH2). In Rhizobium meliloti (strain 1021) (Ensifer meliloti), this protein is Ubiquinone/menaquinone biosynthesis C-methyltransferase UbiE.